We begin with the raw amino-acid sequence, 691 residues long: DNA topoisomerase 1 (691 aa).

One can recognise a Toprim domain in the interval 3-114 (DYLVIVESPA…DCRVVFNEIT (112 aa)). Residues glutamate 9 and aspartate 82 each contribute to the Mg(2+) site. The region spanning 129–558 (NMDLVDAQQA…NFYTDFEKRV (430 aa)) is the Topo IA-type catalytic domain. Residues 163-168 (SAGRVQ) form an interaction with DNA region. Tyrosine 298 (O-(5'-phospho-DNA)-tyrosine intermediate) is an active-site residue. C4-type zinc fingers lie at residues 579–605 (CELCSSPMVYKMGRYGKFLACSNFPDC), 619–647 (CPSCGEGNIVERKSKKKRVFYGCDRYPDC), and 660–683 (CPKCGKMLVEKKLKKGIQVQCVEC).

Belongs to the type IA topoisomerase family. Monomer. Interacts with the RNA polymerase core. Requires Mg(2+) as cofactor.

The catalysed reaction is ATP-independent breakage of single-stranded DNA, followed by passage and rejoining.. Functionally, releases the supercoiling and torsional tension of DNA, which is introduced during the DNA replication and transcription, by transiently cleaving and rejoining one strand of the DNA duplex. Introduces a single-strand break via transesterification at a target site in duplex DNA. The scissile phosphodiester is attacked by the catalytic tyrosine of the enzyme, resulting in the formation of a DNA-(5'-phosphotyrosyl)-enzyme intermediate and the expulsion of a 3'-OH DNA strand. The free DNA strand then undergoes passage around the unbroken strand, thus removing DNA supercoils. Finally, in the religation step, the DNA 3'-OH attacks the covalent intermediate to expel the active-site tyrosine and restore the DNA phosphodiester backbone. The protein is DNA topoisomerase 1 of Bacillus subtilis (strain 168).